The primary structure comprises 158 residues: UPF0725 protein At3g57210 (158 aa).

The protein belongs to the UPF0725 (EMB2204) family.

This is UPF0725 protein At3g57210 from Arabidopsis thaliana (Mouse-ear cress).